The chain runs to 51 residues: MSRNKHVARKLRMAKANRQNRRVPAWVMVKTNYRVRSHPKMRHWRRTKLKV.

Belongs to the eukaryotic ribosomal protein eL39 family.

This is Large ribosomal subunit protein eL39 (rpl39e) from Methanothermobacter thermautotrophicus (strain ATCC 29096 / DSM 1053 / JCM 10044 / NBRC 100330 / Delta H) (Methanobacterium thermoautotrophicum).